A 131-amino-acid polypeptide reads, in one-letter code: 23S rRNA-specific endonuclease VapC20 (131 aa).

The region spanning 2-125 (IFVDTSFWAA…FDGDFSAAGF (124 aa)) is the PINc domain. Positions 5 and 98 each coordinate Mg(2+).

Belongs to the PINc/VapC protein family. Mg(2+) is required as a cofactor.

Its function is as follows. Toxic component of a type II toxin-antitoxin (TA) system. An endoribonuclease that cleaves 23S rRNA in the sarcin-ricin loop (SRL). The SRL sequence is highly conserved and is implicated in GTP hydrolysis by EF-Tu and EF-G. Acts on purified ribosomes but not on isolated RNA. Its toxic effect is neutralized by coexpression with cognate antitoxin VapB20. The chain is 23S rRNA-specific endonuclease VapC20 (vapC20) from Mycobacterium tuberculosis (strain CDC 1551 / Oshkosh).